The chain runs to 305 residues: 2-oxoacid:ferredoxin oxidoreductase subunit beta (305 aa).

The [4Fe-4S] cluster site is built by Cys-12, Cys-15, and Cys-46. Residues 44 to 47 and His-65 each bind thiamine diphosphate; that span reads IGCS. Asp-90 is a binding site for Mg(2+). 91 to 92 is a thiamine diphosphate binding site; that stretch reads GD. Asn-118 and Val-120 together coordinate Mg(2+). 122-123 provides a ligand contact to thiamine diphosphate; sequence GL. Cys-197 lines the [4Fe-4S] cluster pocket.

Heterodimer composed of an alpha and a beta subunit. [4Fe-4S] cluster serves as cofactor. It depends on thiamine diphosphate as a cofactor. The cofactor is Mg(2+).

The catalysed reaction is a 2-oxocarboxylate + 2 oxidized [2Fe-2S]-[ferredoxin] + CoA = an acyl-CoA + 2 reduced [2Fe-2S]-[ferredoxin] + CO2 + H(+). Functionally, catalyzes the coenzyme A-dependent oxidative decarboxylation of different 2-oxoacids such as 2-oxoglutarate, pyruvate and 2-oxobutyrate to form their CoA derivatives. The chain is 2-oxoacid:ferredoxin oxidoreductase subunit beta from Saccharolobus solfataricus (Sulfolobus solfataricus).